The sequence spans 223 residues: Family of serine hydrolases 2 (223 aa).

Catalysis depends on charge relay system residues serine 110, aspartate 174, and histidine 203.

It belongs to the AB hydrolase 3 family.

Its subcellular location is the cytoplasm. Functionally, serine hydrolase of unknown specificity. The chain is Family of serine hydrolases 2 (FSH2) from Saccharomyces cerevisiae (strain ATCC 204508 / S288c) (Baker's yeast).